We begin with the raw amino-acid sequence, 418 residues long: UDP-N-acetylglucosamine 1-carboxyvinyltransferase (418 aa).

Residue 22-23 participates in phosphoenolpyruvate binding; the sequence is KN. UDP-N-acetyl-alpha-D-glucosamine is bound at residue Arg92. Residue Cys116 is the Proton donor of the active site. At Cys116 the chain carries 2-(S-cysteinyl)pyruvic acid O-phosphothioketal. UDP-N-acetyl-alpha-D-glucosamine-binding positions include 121-125, Asp305, and Leu327; that span reads RPIDL.

The protein belongs to the EPSP synthase family. MurA subfamily.

It localises to the cytoplasm. It catalyses the reaction phosphoenolpyruvate + UDP-N-acetyl-alpha-D-glucosamine = UDP-N-acetyl-3-O-(1-carboxyvinyl)-alpha-D-glucosamine + phosphate. The protein operates within cell wall biogenesis; peptidoglycan biosynthesis. In terms of biological role, cell wall formation. Adds enolpyruvyl to UDP-N-acetylglucosamine. The polypeptide is UDP-N-acetylglucosamine 1-carboxyvinyltransferase (Campylobacter jejuni subsp. doylei (strain ATCC BAA-1458 / RM4099 / 269.97)).